The sequence spans 266 residues: Hydroxyethylthiazole kinase (266 aa).

Met39 contributes to the substrate binding site. Positions 115 and 160 each coordinate ATP. Gly187 lines the substrate pocket.

It belongs to the Thz kinase family. It depends on Mg(2+) as a cofactor.

The catalysed reaction is 5-(2-hydroxyethyl)-4-methylthiazole + ATP = 4-methyl-5-(2-phosphooxyethyl)-thiazole + ADP + H(+). Its pathway is cofactor biosynthesis; thiamine diphosphate biosynthesis; 4-methyl-5-(2-phosphoethyl)-thiazole from 5-(2-hydroxyethyl)-4-methylthiazole: step 1/1. In terms of biological role, catalyzes the phosphorylation of the hydroxyl group of 4-methyl-5-beta-hydroxyethylthiazole (THZ). The sequence is that of Hydroxyethylthiazole kinase from Staphylococcus aureus (strain MSSA476).